The sequence spans 338 residues: Lipoate-protein ligase A (338 aa).

Residues 29-216 (PATQRVLFLW…AFFAHYGERV (188 aa)) enclose the BPL/LPL catalytic domain. Residues Arg71, 76–79 (GAVF), and Lys134 each bind ATP. Lys134 is a (R)-lipoate binding site.

It belongs to the LplA family. In terms of assembly, monomer.

The protein resides in the cytoplasm. It carries out the reaction L-lysyl-[lipoyl-carrier protein] + (R)-lipoate + ATP = N(6)-[(R)-lipoyl]-L-lysyl-[lipoyl-carrier protein] + AMP + diphosphate + H(+). Its pathway is protein modification; protein lipoylation via exogenous pathway; protein N(6)-(lipoyl)lysine from lipoate: step 1/2. It participates in protein modification; protein lipoylation via exogenous pathway; protein N(6)-(lipoyl)lysine from lipoate: step 2/2. Functionally, catalyzes both the ATP-dependent activation of exogenously supplied lipoate to lipoyl-AMP and the transfer of the activated lipoyl onto the lipoyl domains of lipoate-dependent enzymes. This Escherichia coli O1:K1 / APEC protein is Lipoate-protein ligase A.